An 89-amino-acid polypeptide reads, in one-letter code: Small ribosomal subunit protein uS15 (89 aa).

Belongs to the universal ribosomal protein uS15 family. As to quaternary structure, part of the 30S ribosomal subunit. Forms a bridge to the 50S subunit in the 70S ribosome, contacting the 23S rRNA.

In terms of biological role, one of the primary rRNA binding proteins, it binds directly to 16S rRNA where it helps nucleate assembly of the platform of the 30S subunit by binding and bridging several RNA helices of the 16S rRNA. Its function is as follows. Forms an intersubunit bridge (bridge B4) with the 23S rRNA of the 50S subunit in the ribosome. This is Small ribosomal subunit protein uS15 from Shewanella halifaxensis (strain HAW-EB4).